The following is a 469-amino-acid chain: Tubulin gamma-2 chain (469 aa).

142–148 (AGGTGSG) contacts GTP.

Belongs to the tubulin family.

It localises to the cytoplasm. Its subcellular location is the cytoskeleton. The protein localises to the microtubule organizing center. Functionally, tubulin is the major constituent of microtubules. The gamma chain is found at microtubule organizing centers (MTOC) such as the spindle poles, suggesting that it is involved in the minus-end nucleation of microtubule assembly. This Oryza sativa subsp. japonica (Rice) protein is Tubulin gamma-2 chain (TUBG2).